Consider the following 534-residue polypeptide: ATP-dependent RNA helicase DBP3 (534 aa).

Positions 1-96 (MGSKRKHESG…VSSSSSGYTQ (96 aa)) are disordered. Residues 8–30 (ESGDVEVKKPKHDNEVKGKEKKE) show a composition bias toward basic and acidic residues. Residues 31–53 (KKEKKEKKEKKEKKEKKEKKEKK) show a composition bias toward basic residues. Over residues 54-63 (EKKEKNEKKE) the composition is skewed to basic and acidic residues. Over residues 82–92 (STVSTVSSSSS) the composition is skewed to low complexity. The short motif at 131 to 157 (LSFDHVQLQSKIAPIVTKFPKPTPIQS) is the Q motif element. The Helicase ATP-binding domain occupies 160–330 (WPYLLNGDDV…ATFMNKAVKV (171 aa)). 173-180 (AETGSGKT) contacts ATP. Residues 278–281 (DEAD) carry the DEAD box motif. In terms of domain architecture, Helicase C-terminal spans 359 to 504 (RLLQLLRQYG…PVPDELLKFG (146 aa)).

The protein belongs to the DEAD box helicase family. DDX5/DBP2 subfamily.

The protein resides in the nucleus. It localises to the nucleolus. The enzyme catalyses ATP + H2O = ADP + phosphate + H(+). ATP-dependent RNA helicase required for 60S ribosomal subunit synthesis. Involved in efficient pre-rRNA processing, predominantly at site A3, which is necessary for the normal formation of 25S and 5.8S rRNAs. The polypeptide is ATP-dependent RNA helicase DBP3 (DBP3) (Meyerozyma guilliermondii (strain ATCC 6260 / CBS 566 / DSM 6381 / JCM 1539 / NBRC 10279 / NRRL Y-324) (Yeast)).